We begin with the raw amino-acid sequence, 358 residues long: DnaJ homolog subfamily B member 11 (358 aa).

Positions 1–22 (MAPQNLGTFCLLLLYLIGTVIA) are cleaved as a signal peptide. Residues 25–90 (DFYKILGVPR…EKRKQYDTYG (66 aa)) enclose the J domain. Thr188 carries the post-translational modification Phosphothreonine. An N-linked (GlcNAc...) asparagine glycan is attached at Asn261.

Part of a large chaperone multiprotein complex comprising DNAJB11, HSP90B1, HSPA5, HYOU, PDIA2, PDIA4, PDIA6, PPIB, SDF2L1, UGGT1 and very small amounts of ERP29, but not, or at very low levels, CALR nor CANX. Binds to denatured substrates in an ATP-independent manner. Interacts via the J domain with HSPA5 in an ATP-dependent manner. In terms of processing, contains high-mannose Endo H-sensitive carbohydrates. Post-translationally, cys-169, Cys-171, Cys-193 and Cys-196 form intramolecular disulfide bonds. The preferential partner for each Cys is not known.

The protein localises to the endoplasmic reticulum lumen. In terms of biological role, as a co-chaperone for HSPA5 it is required for proper folding, trafficking or degradation of proteins. Binds directly to both unfolded proteins that are substrates for ERAD and nascent unfolded peptide chains, but dissociates from the HSPA5-unfolded protein complex before folding is completed. May help recruiting HSPA5 and other chaperones to the substrate. Stimulates HSPA5 ATPase activity. It is necessary for maturation and correct trafficking of PKD1. The protein is DnaJ homolog subfamily B member 11 (DNAJB11) of Bos taurus (Bovine).